The primary structure comprises 68 residues: U1-agatoxin-Ta1c (68 aa).

An N-terminal signal peptide occupies residues 1 to 17 (MKLQLMICLVLLPCFFC). 3 disulfides stabilise this stretch: cysteine 23–cysteine 53, cysteine 39–cysteine 49, and cysteine 42–cysteine 62. Lysine amide is present on lysine 67.

It belongs to the helical arthropod-neuropeptide-derived (HAND) family. In terms of tissue distribution, expressed by the venom gland.

Its subcellular location is the secreted. Toxin that paralyzes insects. May have a direct effect on the insect central nervous system. This chain is U1-agatoxin-Ta1c, found in Eratigena agrestis (Hobo spider).